Here is a 297-residue protein sequence, read N- to C-terminus: ClpXP adapter protein SpxH (297 aa).

Belongs to the SpxH family. As to quaternary structure, interacts with Spx.

The protein localises to the cytoplasm. In terms of biological role, adapter protein required for efficient degradation of Spx by ClpXP under non-stress conditions. Interaction with Spx stabilizes Spx and exposes the C-terminus of Spx for recognition and proteolysis by ClpXP. This chain is ClpXP adapter protein SpxH, found in Bacillus thuringiensis subsp. konkukian (strain 97-27).